Consider the following 250-residue polypeptide: Acetylglutamate kinase (250 aa).

Substrate is bound by residues 41-42, Arg63, and Asn156; that span reads GG.

Belongs to the acetylglutamate kinase family. ArgB subfamily.

The protein localises to the cytoplasm. The enzyme catalyses N-acetyl-L-glutamate + ATP = N-acetyl-L-glutamyl 5-phosphate + ADP. The protein operates within amino-acid biosynthesis; L-arginine biosynthesis; N(2)-acetyl-L-ornithine from L-glutamate: step 2/4. Catalyzes the ATP-dependent phosphorylation of N-acetyl-L-glutamate. This is Acetylglutamate kinase from Listeria monocytogenes serotype 4b (strain CLIP80459).